A 480-amino-acid chain; its full sequence is MPIFVNTVYCKNILALSMTKKFKTIIDAIGGNIIVNSTILKKLSPYFRTHLRQKYTKNKDPVTRVCLDLDIHSLTSIVIYSYTGKVYIDSHNVVNLLRASILTSVEFIIYTCINFILRDFRKEYCVECYMMGIEYGLSNLLCHTKNFIAKHFLELEDDIIDNFDYLSMKLILESDELNVPDEDYVVDFVIKWYIKRRNKLGNLLLLIKNVIRSNYLSPRGINNVKWILDCTKIFHCDKQPRKSYKYPFIEYPMNMDQIIDIFHMCTSTHVGEVVYLIGGWMNNEIHNNAIAVNYISNNWIPIPPMNSPRLYATGIPANNKLYVVGGLPNPTSVERWFHGDAAWVNMPSLLKPRCNPAVASINNVIYVMGGHSETDTTTEYLLPNHDQWQFGPSTYYPHYKSCALVFGRRLFLVGRNAEFYCESSNTWTLIDDPIYPRDNPELIIVDNKLLLIGGFYRGSYIDTIEVYNHHTYSWNIWDGK.

Residues 10 to 90 (CKNILALSMT…SYTGKVYIDS (81 aa)) form the BTB domain. Residues 125–223 (CVECYMMGIE…NYLSPRGINN (99 aa)) enclose the BACK domain. 5 Kelch repeats span residues 273–319 (VVYL…PANN), 320–363 (KLYV…SINN), 365–408 (IYVM…VFGR), 410–447 (LFLV…IVDN), and 448–480 (KLLL…WDGK).

The protein belongs to the orthopoxvirus OPG047 family.

Might have a role in the suppression of host immune response. In Vaccinia virus (strain Copenhagen) (VACV), this protein is Immune evasion protein OPG047 (OPG047).